Reading from the N-terminus, the 141-residue chain is Large ribosomal subunit protein uL22 (141 aa).

Residues Glu-110–Ser-141 are disordered. A compositionally biased stretch (low complexity) spans Lys-117 to Lys-134.

It belongs to the universal ribosomal protein uL22 family. In terms of assembly, part of the 50S ribosomal subunit.

This protein binds specifically to 23S rRNA; its binding is stimulated by other ribosomal proteins, e.g. L4, L17, and L20. It is important during the early stages of 50S assembly. It makes multiple contacts with different domains of the 23S rRNA in the assembled 50S subunit and ribosome. Functionally, the globular domain of the protein is located near the polypeptide exit tunnel on the outside of the subunit, while an extended beta-hairpin is found that lines the wall of the exit tunnel in the center of the 70S ribosome. This is Large ribosomal subunit protein uL22 from Campylobacter jejuni (strain RM1221).